The chain runs to 156 residues: Methylated-DNA--protein-cysteine methyltransferase (156 aa).

Catalysis depends on Cys-120, which acts as the Nucleophile; methyl group acceptor.

Belongs to the MGMT family.

It is found in the cytoplasm. The catalysed reaction is a 6-O-methyl-2'-deoxyguanosine in DNA + L-cysteinyl-[protein] = S-methyl-L-cysteinyl-[protein] + a 2'-deoxyguanosine in DNA. It carries out the reaction a 4-O-methyl-thymidine in DNA + L-cysteinyl-[protein] = a thymidine in DNA + S-methyl-L-cysteinyl-[protein]. Its function is as follows. Involved in the cellular defense against the biological effects of O6-methylguanine (O6-MeG) and O4-methylthymine (O4-MeT) in DNA. Repairs the methylated nucleobase in DNA by stoichiometrically transferring the methyl group to a cysteine residue in the enzyme. This is a suicide reaction: the enzyme is irreversibly inactivated. This chain is Methylated-DNA--protein-cysteine methyltransferase, found in Metallosphaera sedula (strain ATCC 51363 / DSM 5348 / JCM 9185 / NBRC 15509 / TH2).